The primary structure comprises 122 residues: Large ribosomal subunit protein uL14c (122 aa).

Belongs to the universal ribosomal protein uL14 family. In terms of assembly, part of the 50S ribosomal subunit.

Its subcellular location is the plastid. It is found in the chloroplast. Its function is as follows. Binds to 23S rRNA. This Populus alba (White poplar) protein is Large ribosomal subunit protein uL14c.